Reading from the N-terminus, the 140-residue chain is Ribonuclease P protein component (140 aa).

The segment at 33–54 (RALKPSSAKKSSLDTAAKTQPA) is disordered.

Belongs to the RnpA family. Consists of a catalytic RNA component (M1 or rnpB) and a protein subunit.

The enzyme catalyses Endonucleolytic cleavage of RNA, removing 5'-extranucleotides from tRNA precursor.. Functionally, RNaseP catalyzes the removal of the 5'-leader sequence from pre-tRNA to produce the mature 5'-terminus. It can also cleave other RNA substrates such as 4.5S RNA. The protein component plays an auxiliary but essential role in vivo by binding to the 5'-leader sequence and broadening the substrate specificity of the ribozyme. The protein is Ribonuclease P protein component of Trichormus variabilis (strain ATCC 29413 / PCC 7937) (Anabaena variabilis).